The chain runs to 347 residues: ATP-dependent (S)-NAD(P)H-hydrate dehydratase (347 aa).

A YjeF C-terminal domain is found at 53 to 344 (TLQLVRNIIP…AEVGAAFSKL (292 aa)). Tyr-85 carries the post-translational modification Phosphotyrosine. (6S)-NADPHX contacts are provided by residues Gly-153 and 206-212 (NHVEFSR). N-linked (GlcNAc...) asparagine glycosylation is present at Asn-240. Residues 246–250 (KGERD) and 265–274 (GSSRRCGGQG) contribute to the ATP site. Asp-275 is a (6S)-NADPHX binding site. The N-linked (GlcNAc...) asparagine glycan is linked to Asn-297.

This sequence belongs to the NnrD/CARKD family. It depends on Mg(2+) as a cofactor.

The protein localises to the mitochondrion. The enzyme catalyses (6S)-NADHX + ATP = ADP + phosphate + NADH + H(+). The catalysed reaction is (6S)-NADPHX + ATP = ADP + phosphate + NADPH + H(+). Its function is as follows. Catalyzes the dehydration of the S-form of NAD(P)HX at the expense of ATP, which is converted to ADP. Together with NAD(P)HX epimerase, which catalyzes the epimerization of the S- and R-forms, the enzyme allows the repair of both epimers of NAD(P)HX, a damaged form of NAD(P)H that is a result of enzymatic or heat-dependent hydration. This is ATP-dependent (S)-NAD(P)H-hydrate dehydratase from Homo sapiens (Human).